Reading from the N-terminus, the 568-residue chain is NADPH oxidase 3 (568 aa).

At Met1 to Thr13 the chain is on the cytoplasmic side. Residues Ile14–Tyr34 form a helical membrane-spanning segment. At Glu35 to Leu51 the chain is on the extracellular side. The chain crosses the membrane as a helical span at residues Ala52–Val72. One can recognise a Ferric oxidoreductase domain in the interval Arg55 to Ile284. Residues Ser73 to Lys103 lie on the Cytoplasmic side of the membrane. The helical transmembrane segment at Leu104 to Leu124 threads the bilayer. Residues Glu125–Glu167 lie on the Extracellular side of the membrane. A glycan (N-linked (GlcNAc...) asparagine) is linked at Asn163. Residues Leu168–Met188 form a helical membrane-spanning segment. Over Thr189–Glu201 the chain is Cytoplasmic. Residues Leu202–Thr222 form a helical membrane-spanning segment. Over Gly223–Asp395 the chain is Extracellular. The N-linked (GlcNAc...) asparagine glycan is linked to Asn238. The region spanning Arg285 to Asp395 is the FAD-binding FR-type domain. The helical transmembrane segment at Val396–Ala416 threads the bilayer. The Cytoplasmic portion of the chain corresponds to Leu417–Phe568.

In terms of assembly, interacts with CYBA/p22phox. Heterodimerization with CYBA/p22phox is essential for its activity and cell membrane localization. The cofactor is heme. Post-translationally, N-glycosylated in a CYBA/p22phox-dependent manner.

It localises to the cell membrane. It catalyses the reaction NADPH + 2 O2 = 2 superoxide + NADP(+) + H(+). Its activity is regulated as follows. Activated by the ototoxic drug cisplatin. Activated by NOXO1. Cooperatively activated by NCF1 and NCF2 or NOXA1 in a phorbol 12-myristate 13-acetate (PMA)-dependent manner. Inhibited by diphenyleneiodonium chloride. Functionally, NADPH oxidase that catalyzes the generation of superoxide from molecular oxygen utilizing NADPH as an electron donor, upon formation of a complex with CYBA/p22phox. Plays a role in the biogenesis of otoconia/otolith, which are crystalline structures of the inner ear involved in the perception of gravity. This chain is NADPH oxidase 3 (NOX3), found in Homo sapiens (Human).